A 66-amino-acid chain; its full sequence is Hemicalcin (66 aa).

The first 21 residues, M1–S21, serve as a signal peptide directing secretion. A propeptide spanning residues T22–R33 is cleaved from the precursor. Cystine bridges form between C36-C50, C43-C54, and C49-C65. The essential for stimulation of [3H]ryanodine binding to RYR1 stretch occupies residues K55 to R57.

Belongs to the scorpion calcin family. Expressed by the venom gland.

The protein localises to the secreted. In terms of biological role, this toxin stabilizes ryanodine receptor 1 (RyR1) opening in a long-lasting subconductance state (20% and 38% of the full conductance state have been found). It promotes an increase in the opening probability at intermediate concentration. Furthermore, it triggers calcium release from sarcoplasmic vesicles (68 nM are enough to induce a sharp release, and 45% of the total calcium is released after toxin (100 nM) addition) probably by acting as a cell-penetrating peptide (CPP). In addition, it has been shown to dose-dependently stimulate ryanodine binding to RyR1 (EC(50)=6.9-71 nM). It also augments the bell-shaped calcium-[3H]ryanodine binding curve that is maximal at about 10 uM calcium concentration. It binds a different site as ryanodine. It acts synergistically with caffeine. In vivo, intracerebroventricular injection into mice induces neurotoxic symptoms, followed by death. The protein is Hemicalcin of Hemiscorpius lepturus (Scorpion).